A 508-amino-acid polypeptide reads, in one-letter code: Aspartic proteinase A3 (508 aa).

The signal sequence occupies residues 1–25 (MGTRFQSFLLVFLLSCLILISTASC). A propeptide spans 26-69 (ERNGDGTIRIGLKKRKLDRSNRLASQLFLKNRGSHWSPKHYFRL) (activation peptide). In terms of domain architecture, Peptidase A1 spans 87 to 505 (YYGDITIGTP…DYGKGRVGFA (419 aa)). The active site involves Asp-105. 2 disulfides stabilise this stretch: Cys-118–Cys-124 and Cys-283–Cys-287. The active site involves Asp-292. The region spanning 317-419 (IVSRECKAVV…AELCDHIPTQ (103 aa)) is the Saposin B-type domain. Intrachain disulfides connect Cys-322/Cys-413, Cys-347/Cys-385, Cys-353/Cys-382, and Cys-427/Cys-464. The N-linked (GlcNAc...) asparagine glycan is linked to Asn-399.

Belongs to the peptidase A1 family. As to expression, expressed in petals, carpels and seed pods.

The protein resides in the secreted. Functionally, involved in the processing and degradation of storage proteins. This is Aspartic proteinase A3 (APA3) from Arabidopsis thaliana (Mouse-ear cress).